A 323-amino-acid chain; its full sequence is Fructose-1,6-bisphosphatase class 1 (323 aa).

4 residues coordinate Mg(2+): E84, D103, L105, and D106. Substrate contacts are provided by residues 106 to 109 (DGSS), N198, and K264. A Mg(2+)-binding site is contributed by E270.

Belongs to the FBPase class 1 family. As to quaternary structure, homotetramer. The cofactor is Mg(2+).

It localises to the cytoplasm. It carries out the reaction beta-D-fructose 1,6-bisphosphate + H2O = beta-D-fructose 6-phosphate + phosphate. It participates in carbohydrate biosynthesis; gluconeogenesis. The sequence is that of Fructose-1,6-bisphosphatase class 1 from Hydrogenovibrio crunogenus (strain DSM 25203 / XCL-2) (Thiomicrospira crunogena).